The sequence spans 282 residues: Putative 1-acyl-sn-glycerol-3-phosphate acyltransferase acl-2 (282 aa).

Transmembrane regions (helical) follow at residues 4–24 and 32–52; these read FWSI…NIST and ISFY…TMIP. Residues 98–103 carry the HXXXXD motif motif; the sequence is HQSSLD. Residues 122–142 form a helical membrane-spanning segment; the sequence is ILAYVPFFNLGAYFSNTIFID.

The protein belongs to the 1-acyl-sn-glycerol-3-phosphate acyltransferase family.

Its subcellular location is the membrane. It carries out the reaction a 1-acyl-sn-glycero-3-phosphate + an acyl-CoA = a 1,2-diacyl-sn-glycero-3-phosphate + CoA. Its pathway is phospholipid metabolism; CDP-diacylglycerol biosynthesis; CDP-diacylglycerol from sn-glycerol 3-phosphate: step 2/3. In terms of biological role, converts lysophosphatidic acid (LPA) into phosphatidic acid by incorporating an acyl moiety at the sn-2 position of the glycerol backbone. This is Putative 1-acyl-sn-glycerol-3-phosphate acyltransferase acl-2 (acl-2) from Caenorhabditis elegans.